The following is a 504-amino-acid chain: Maturase K (504 aa).

Belongs to the intron maturase 2 family. MatK subfamily.

Its subcellular location is the plastid. It is found in the chloroplast. In terms of biological role, usually encoded in the trnK tRNA gene intron. Probably assists in splicing its own and other chloroplast group II introns. This chain is Maturase K, found in Lupinus argenteus (Silvery lupine).